We begin with the raw amino-acid sequence, 198 residues long: Probable chemoreceptor glutamine deamidase CheD (198 aa).

Belongs to the CheD family.

It catalyses the reaction L-glutaminyl-[protein] + H2O = L-glutamyl-[protein] + NH4(+). In terms of biological role, probably deamidates glutamine residues to glutamate on methyl-accepting chemotaxis receptors (MCPs), playing an important role in chemotaxis. In Xanthomonas euvesicatoria pv. vesicatoria (strain 85-10) (Xanthomonas campestris pv. vesicatoria), this protein is Probable chemoreceptor glutamine deamidase CheD.